The following is a 62-amino-acid chain: Large ribosomal subunit protein eL37 (62 aa).

Residues C20, C23, C35, and C38 each coordinate Zn(2+). The C4-type zinc finger occupies 20–38 (CRRCGRRSYNVAKGYCAAC).

The protein belongs to the eukaryotic ribosomal protein eL37 family. Requires Zn(2+) as cofactor.

Binds to the 23S rRNA. The chain is Large ribosomal subunit protein eL37 (rpl37e) from Aeropyrum pernix (strain ATCC 700893 / DSM 11879 / JCM 9820 / NBRC 100138 / K1).